The chain runs to 281 residues: Release factor glutamine methyltransferase (281 aa).

S-adenosyl-L-methionine is bound by residues G121–G125, D144, and N188. N188–Y191 lines the substrate pocket.

It belongs to the protein N5-glutamine methyltransferase family. PrmC subfamily.

The enzyme catalyses L-glutaminyl-[peptide chain release factor] + S-adenosyl-L-methionine = N(5)-methyl-L-glutaminyl-[peptide chain release factor] + S-adenosyl-L-homocysteine + H(+). In terms of biological role, methylates the class 1 translation termination release factors RF1/PrfA and RF2/PrfB on the glutamine residue of the universally conserved GGQ motif. The protein is Release factor glutamine methyltransferase of Aquifex aeolicus (strain VF5).